We begin with the raw amino-acid sequence, 56 residues long: Preprotein translocase subunit SecG (56 aa).

Residues 1-29 (MAKEKATLPPTGAGLMRFFDEDTRAVKVS) lie on the Cytoplasmic side of the membrane. A helical transmembrane segment spans residues 30 to 49 (PKGVIALTLLLIAFEFILHM). Residues 50-56 (FGSSIFG) lie on the Extracellular side of the membrane.

The protein belongs to the SEC61-beta family. As to quaternary structure, component of the protein translocase complex. Heterotrimer consisting of alpha (SecY), beta (SecG) and gamma (SecE) subunits. Can form oligomers of the heterotrimer.

It localises to the cell membrane. Functionally, involved in protein export. The function of the beta subunit is unknown, but it may be involved in stabilization of the trimeric complex. The sequence is that of Preprotein translocase subunit SecG from Thermococcus kodakarensis (strain ATCC BAA-918 / JCM 12380 / KOD1) (Pyrococcus kodakaraensis (strain KOD1)).